Here is a 498-residue protein sequence, read N- to C-terminus: Glycerol kinase (498 aa).

Thr-11 is a binding site for ADP. ATP-binding residues include Thr-11, Thr-12, and Ser-13. Thr-11 serves as a coordination point for sn-glycerol 3-phosphate. An ADP-binding site is contributed by Arg-15. Residues Arg-81, Glu-82, Tyr-133, and Asp-242 each coordinate sn-glycerol 3-phosphate. Residues Arg-81, Glu-82, Tyr-133, Asp-242, and Gln-243 each contribute to the glycerol site. Thr-264 and Gly-307 together coordinate ADP. ATP contacts are provided by Thr-264, Gly-307, Gln-311, and Gly-411. Position 411 (Gly-411) interacts with ADP.

This sequence belongs to the FGGY kinase family.

The enzyme catalyses glycerol + ATP = sn-glycerol 3-phosphate + ADP + H(+). The protein operates within polyol metabolism; glycerol degradation via glycerol kinase pathway; sn-glycerol 3-phosphate from glycerol: step 1/1. Inhibited by fructose 1,6-bisphosphate (FBP). Its function is as follows. Key enzyme in the regulation of glycerol uptake and metabolism. Catalyzes the phosphorylation of glycerol to yield sn-glycerol 3-phosphate. This Afipia carboxidovorans (strain ATCC 49405 / DSM 1227 / KCTC 32145 / OM5) (Oligotropha carboxidovorans) protein is Glycerol kinase.